The sequence spans 311 residues: Pantothenate kinase (311 aa).

93 to 100 provides a ligand contact to ATP; sequence GSVAVGKS.

This sequence belongs to the prokaryotic pantothenate kinase family.

It is found in the cytoplasm. The enzyme catalyses (R)-pantothenate + ATP = (R)-4'-phosphopantothenate + ADP + H(+). It functions in the pathway cofactor biosynthesis; coenzyme A biosynthesis; CoA from (R)-pantothenate: step 1/5. The chain is Pantothenate kinase (coaA) from Haemophilus influenzae (strain ATCC 51907 / DSM 11121 / KW20 / Rd).